Here is a 213-residue protein sequence, read N- to C-terminus: Hemolysin-3 homolog (213 aa).

Transmembrane regions (helical) follow at residues 11-31, 41-61, 75-95, 103-123, 127-147, 157-177, and 185-205; these read AITH…LIIF, IVSF…STLL, IIDH…FLLG, FTLL…KIFF, FILL…IAVK, GFSL…FYIW, and AIWH…VLFY.

This sequence belongs to the UPF0073 (Hly-III) family.

It localises to the cell membrane. This Bacillus subtilis (strain 168) protein is Hemolysin-3 homolog (yplQ).